We begin with the raw amino-acid sequence, 550 residues long: Glypican-1 (550 aa).

Positions 1 to 20 are cleaved as a signal peptide; that stretch reads MRFFPWGFWLLCVASAPARG. 7 cysteine pairs are disulfide-bonded: Cys-29/Cys-65, Cys-59/Cys-253, Cys-66/Cys-256, Cys-188/Cys-340, Cys-243/Cys-276, Cys-265/Cys-412, and Cys-269/Cys-398. Residues Asn-76 and Asn-113 are each glycosylated (N-linked (GlcNAc...) asparagine). An N-linked (GlcNAc...) asparagine glycan is attached at Asn-382. Disordered regions lie at residues 475–494 and 502–522; these read FQDASDDMSGSGSGDSCPDD and KSPSTRQPETHAIPKQSGHGV. Residues 481 to 494 are compositionally biased toward low complexity; that stretch reads DMSGSGSGDSCPDD. Residues Ser-483, Ser-485, and Ser-487 are each glycosylated (O-linked (Xyl...) (heparan sulfate) serine). Residue Gly-524 is the site of GPI-anchor amidated glycine attachment. Positions 525 to 550 are cleaved as a propeptide — removed in mature form; that stretch reads ASSRSLPSAFLLFLSGASIVVQHLWR.

This sequence belongs to the glypican family. In terms of processing, O-glycosylated with heparan sulfate.

The protein resides in the cell membrane. It is found in the endosome. It localises to the secreted. The protein localises to the extracellular space. Cell surface proteoglycan that bears heparan sulfate. Modulates Wnt-signaling pathway. In Gallus gallus (Chicken), this protein is Glypican-1 (GPC1).